The primary structure comprises 577 residues: Optineurin (577 aa).

2 disordered regions span residues 1–32 (MSHQ…HPNL) and 101–143 (SHEN…KDQL). Residues 38–170 (EELLQQMKEL…VSELQLKLNS (133 aa)) are a coiled coil. The interval 58 to 209 (MKLNNQAMKG…GPTRTVSTGT (152 aa)) is interaction with Rab8. The LIR signature appears at 176–181 (DSFVEI). Ser177 bears the Phosphoserine; by TBK1 mark. The span at 186-197 (GEAEGSVKEIKH) shows a compositional bias: basic and acidic residues. Disordered regions lie at residues 186 to 209 (GEAE…STGT) and 261 to 297 (VSDF…TVGS). Ser198 is subject to Phosphoserine. Positions 239-508 (CLREGNQKVE…LLKENDAFED (270 aa)) form a coiled coil. Basic and acidic residues-rich tracts occupy residues 261-274 (VSDF…RSEI) and 281-292 (STEKENDEEKGP). Ser342 carries the post-translational modification Phosphoserine. Residues 411 to 577 (TRKESEKVDR…LQIHVMDCII (167 aa)) are interaction with HD. The segment at 412–520 (RKESEKVDRA…RQSLMEMQSR (109 aa)) is interaction with MYO6. Positions 474–479 (DFHAER) match the UBAN motif. Ser526 carries the phosphoserine modification. The CCHC NOA-type zinc finger occupies 547-577 (QRNIPIHSCPKCGEVLPDIDTLQIHVMDCII). Zn(2+) is bound by residues Cys555, Cys558, His571, and Cys575.

As to quaternary structure, self-associates. Interacts with HD. Interacts with GTF3A. Interacts with MYO6. Interacts (via UBAN) with ubiquitinated TFRC. Interacts with GTP-bound Rab8 (RAB8A and/or RAB8B). Interacts with TBC1D17. Interacts with TBK1. Interacts with TRAF3. Binds to linear ubiquitin chains. Interacts with LC3 family members MAP1LC3A, MAP1LC3B, GABARAP, GABARAPL1 and GABARAPL2; OPTN phosphorylation increases the association (at least with MAP1LC3B). Interacts with RAB12; the interaction may be indirect. Interacts with TBK1; this interaction leads to the Golgi localization of TBK1 and its subsequent activation. Interacts with palmitoyltransferase ZDHHC17/HIP14; the interaction does not lead to palmitoylation of OPTN. Interacts with CYLD. Interacts with TOM1; the interaction is indirect and is mediated by MYO6, which acts as a bridge between TOM1 and OPTN. Interacts with USP12; the interaction is independent of USP12 deubiquitinase activity and may be involved in regulation of autophagic flux. In terms of assembly, (Microbial infection) Interacts with E3 14.7 kDa protein of group C human adenovirus. Interacts with Bluetongue virus protein NS3. Post-translationally, phosphorylated by TBK1, leading to restrict bacterial proliferation in case of infection. Phosphorylation is induced by phorbol esters and decreases its half-time. As to expression, present in aqueous humor of the eye (at protein level). Expressed in the trabecular meshwork (at protein level). Expressed in nonpigmented ciliary epithelium (at protein level). Expressed at high levels in skeletal muscle, also detected in heart, brain, pancreas, kidney, placenta and liver. Expressed in dermal fibroblasts (at protein level).

The protein resides in the cytoplasm. It localises to the perinuclear region. The protein localises to the golgi apparatus. It is found in the trans-Golgi network. Its subcellular location is the cytoplasmic vesicle. The protein resides in the autophagosome. It localises to the recycling endosome. Plays an important role in the maintenance of the Golgi complex, in membrane trafficking, in exocytosis, through its interaction with myosin VI and Rab8. Links myosin VI to the Golgi complex and plays an important role in Golgi ribbon formation. Plays a role in the activation of innate immune response during viral infection. Mechanistically, recruits TBK1 at the Golgi apparatus, promoting its trans-phosphorylation after RLR or TLR3 stimulation. In turn, activated TBK1 phosphorylates its downstream partner IRF3 to produce IFN-beta/IFNB1. Plays a neuroprotective role in the eye and optic nerve. May act by regulating membrane trafficking and cellular morphogenesis via a complex that contains Rab8 and huntingtin (HD). Mediates the interaction of Rab8 with the probable GTPase-activating protein TBC1D17 during Rab8-mediated endocytic trafficking, such as that of transferrin receptor (TFRC/TfR); regulates Rab8 recruitment to tubules emanating from the endocytic recycling compartment. Autophagy receptor that interacts directly with both the cargo to become degraded and an autophagy modifier of the MAP1 LC3 family; targets ubiquitin-coated bacteria (xenophagy), such as cytoplasmic Salmonella enterica, and appears to function in the same pathway as SQSTM1 and CALCOCO2/NDP52. Functionally, (Microbial infection) May constitute a cellular target for various viruses, such as adenovirus E3 14.7 or Bluetongue virus, to inhibit innate immune response. During RNA virus infection, such as that of Sendai virus, negatively regulates the induction of IFNB1. This chain is Optineurin (OPTN), found in Homo sapiens (Human).